A 260-amino-acid chain; its full sequence is HTH-type transcriptional repressor NanR (260 aa).

Residues 1-22 form a disordered region; that stretch reads MNAFDSQAEDSPTSLGRSLRRR. The HTH gntR-type domain occupies 27–95; it reads KKLSEMVEEE…NGERARVSRP (69 aa). The segment at residues 55 to 74 is a DNA-binding region (H-T-H motif); the sequence is ERELMAFFNVGRPSVREALA.

Belongs to the NanR family.

Transcriptional repressor that controls expression of the genes required for the catabolism of sialic acids. The chain is HTH-type transcriptional repressor NanR from Salmonella newport (strain SL254).